The sequence spans 230 residues: Claudin-2 (230 aa).

Topologically, residues 1–7 (MASLGLQ) are cytoplasmic. A helical membrane pass occupies residues 8–28 (LVGYVLGLLGLLGTVIAMLLP). Topologically, residues 29–81 (SWRTSSYVGASIVTAVGFSKGLWMECATHSTGITQCDIYSTMLGLPADIQAAQ) are extracellular. Cysteines 54 and 64 form a disulfide. Residues 82-102 (AMMVTSSAMSSLACIVSVVGM) form a helical membrane-spanning segment. Topologically, residues 103-116 (RCTVFFQESRAKDR) are cytoplasmic. A helical transmembrane segment spans residues 117-137 (VAVVGGVFFILGGLLGFIPVA). Residues 138–162 (WNLHGILRDFYSPLVPDSMKFEIGE) are Extracellular-facing. The chain crosses the membrane as a helical span at residues 163-183 (ALYLGIISSLFSLIAGIFLCF). Residues 184 to 230 (SCSPQGNRSNYYDAYQAQPLATRSSPRPGQAPKGKSEFNSYSLTGYV) are Cytoplasmic-facing. Residues 205 to 230 (TRSSPRPGQAPKGKSEFNSYSLTGYV) are disordered. Lysine 218 participates in a covalent cross-link: Glycyl lysine isopeptide (Lys-Gly) (interchain with G-Cter in SUMO). Phosphoserine is present on residues serine 219 and serine 223. Positions 220 to 230 (EFNSYSLTGYV) are enriched in polar residues. An interaction with TJP1, TJP2 and TJP3 region spans residues 229–230 (YV).

The protein belongs to the claudin family. In terms of assembly, can form homo- and heteropolymers with other claudins to mediate paracellular barrier and channel functions of tight junctions in response to physiological stimuli. Homopolymers interact with CLDN3, but not CLDN1, homopolymers. Directly interacts with TJP1/ZO-1, TJP2/ZO-2 and TJP3/ZO-3. Post-translationally, the disulfide bond is necessary for pore formation, but is not required for correct protein trafficking.

Its subcellular location is the cell junction. It is found in the tight junction. The protein localises to the cell membrane. The catalysed reaction is Na(+)(in) = Na(+)(out). The enzyme catalyses K(+)(in) = K(+)(out). It catalyses the reaction Rb(+)(in) = Rb(+)(out). It carries out the reaction Li(+)(in) = Li(+)(out). The catalysed reaction is Cs(+)(in) = Cs(+)(out). The enzyme catalyses Ca(2+)(in) = Ca(2+)(out). It catalyses the reaction methylamine(out) = methylamine(in). It carries out the reaction choline(out) = choline(in). The catalysed reaction is H2O(in) = H2O(out). Its function is as follows. Forms paracellular channels: polymerizes in tight junction strands with cation- and water-selective channels through the strands, conveying epithelial permeability in a process known as paracellular tight junction permeability. In intestinal epithelium, allows for sodium and water fluxes from the peritoneal side to the lumen of the intestine to regulate nutrient absorption and clear enteric pathogens as part of mucosal immune response. In kidney, allows passive sodium and calcium reabsorption across proximal tubules from the lumen back to the bloodstream. In the hepatobiliary tract, allows paracellular water and cation fluxes in the hepatic perivenous areas and biliary epithelium to generate bile flow and maintain osmotic gradients. This chain is Claudin-2 (CLDN2), found in Bos taurus (Bovine).